A 491-amino-acid chain; its full sequence is Ketol-acid reductoisomerase (NADP(+)) (491 aa).

The region spanning 15–208 is the KARI N-terminal Rossmann domain; sequence AQLGKCRFMG…GGHRAGVLES (194 aa). Residues 45–48, Arg68, Arg76, Ser78, and 108–110 contribute to the NADP(+) site; these read CGAQ and DKQ. His132 is a catalytic residue. Residue Gly158 coordinates NADP(+). 2 consecutive KARI C-terminal knotted domains span residues 209–344 and 345–484; these read SFVA…TAPQ and FEGK…MTDM. The Mg(2+) site is built by Asp217, Glu221, Glu389, and Glu393. Residue Ser414 participates in substrate binding.

Belongs to the ketol-acid reductoisomerase family. The cofactor is Mg(2+).

The enzyme catalyses (2R)-2,3-dihydroxy-3-methylbutanoate + NADP(+) = (2S)-2-acetolactate + NADPH + H(+). It catalyses the reaction (2R,3R)-2,3-dihydroxy-3-methylpentanoate + NADP(+) = (S)-2-ethyl-2-hydroxy-3-oxobutanoate + NADPH + H(+). Its pathway is amino-acid biosynthesis; L-isoleucine biosynthesis; L-isoleucine from 2-oxobutanoate: step 2/4. It participates in amino-acid biosynthesis; L-valine biosynthesis; L-valine from pyruvate: step 2/4. Involved in the biosynthesis of branched-chain amino acids (BCAA). Catalyzes an alkyl-migration followed by a ketol-acid reduction of (S)-2-acetolactate (S2AL) to yield (R)-2,3-dihydroxy-isovalerate. In the isomerase reaction, S2AL is rearranged via a Mg-dependent methyl migration to produce 3-hydroxy-3-methyl-2-ketobutyrate (HMKB). In the reductase reaction, this 2-ketoacid undergoes a metal-dependent reduction by NADPH to yield (R)-2,3-dihydroxy-isovalerate. This Salmonella dublin (strain CT_02021853) protein is Ketol-acid reductoisomerase (NADP(+)).